Here is a 303-residue protein sequence, read N- to C-terminus: Protoheme IX farnesyltransferase (303 aa).

9 helical membrane passes run 26 to 46 (VVAL…PGMV), 48 to 68 (IDIL…AAAV), 98 to 118 (AILF…VWVN), 120 to 140 (LTAW…TFWL), 148 to 168 (IVIG…AVTG), 174 to 194 (ALLL…ALAV), 221 to 241 (ILLY…THML), 244 to 264 (LYLL…VAMM), and 278 to 298 (YSIV…YLLP).

Belongs to the UbiA prenyltransferase family. Protoheme IX farnesyltransferase subfamily.

Its subcellular location is the cell inner membrane. The catalysed reaction is heme b + (2E,6E)-farnesyl diphosphate + H2O = Fe(II)-heme o + diphosphate. It participates in porphyrin-containing compound metabolism; heme O biosynthesis; heme O from protoheme: step 1/1. Converts heme B (protoheme IX) to heme O by substitution of the vinyl group on carbon 2 of heme B porphyrin ring with a hydroxyethyl farnesyl side group. In Saccharophagus degradans (strain 2-40 / ATCC 43961 / DSM 17024), this protein is Protoheme IX farnesyltransferase.